Reading from the N-terminus, the 373-residue chain is Hydrogenase maturation factor HypD (373 aa).

Fe cation is bound by residues Cys41, Cys69, and Cys72.

It belongs to the HypD family. In terms of assembly, monomer. Interacts with HypC. Forms a complex with HypC, or HybG, and HypE. [4Fe-4S] cluster is required as a cofactor.

The protein operates within protein modification; [NiFe] hydrogenase maturation. Involved in the maturation of [NiFe] hydrogenases. Involved in the biosynthesis of the Fe(CN)(2)CO cofactor. HypD may act as a scaffold on which the Fe(CN)(2)CO cofactor is formed. In complex with HypC, accepts the cyanide ligand generated by HypF and HypE, and also coordinates the carbon monoxide ligand. Required for the formation of all three hydrogenase isoenzymes. This Escherichia coli (strain K12) protein is Hydrogenase maturation factor HypD.